We begin with the raw amino-acid sequence, 233 residues long: Phosphatidylserine decarboxylase proenzyme (233 aa).

Ser188 acts as the Schiff-base intermediate with substrate; via pyruvic acid in catalysis. Ser188 is modified (pyruvic acid (Ser); by autocatalysis).

It belongs to the phosphatidylserine decarboxylase family. PSD-A subfamily. Heterodimer of a large membrane-associated beta subunit and a small pyruvoyl-containing alpha subunit. The cofactor is pyruvate. Is synthesized initially as an inactive proenzyme. Formation of the active enzyme involves a self-maturation process in which the active site pyruvoyl group is generated from an internal serine residue via an autocatalytic post-translational modification. Two non-identical subunits are generated from the proenzyme in this reaction, and the pyruvate is formed at the N-terminus of the alpha chain, which is derived from the carboxyl end of the proenzyme. The post-translation cleavage follows an unusual pathway, termed non-hydrolytic serinolysis, in which the side chain hydroxyl group of the serine supplies its oxygen atom to form the C-terminus of the beta chain, while the remainder of the serine residue undergoes an oxidative deamination to produce ammonia and the pyruvoyl prosthetic group on the alpha chain.

The protein resides in the cell membrane. It carries out the reaction a 1,2-diacyl-sn-glycero-3-phospho-L-serine + H(+) = a 1,2-diacyl-sn-glycero-3-phosphoethanolamine + CO2. It functions in the pathway phospholipid metabolism; phosphatidylethanolamine biosynthesis; phosphatidylethanolamine from CDP-diacylglycerol: step 2/2. Its function is as follows. Catalyzes the formation of phosphatidylethanolamine (PtdEtn) from phosphatidylserine (PtdSer). The protein is Phosphatidylserine decarboxylase proenzyme of Ruegeria sp. (strain TM1040) (Silicibacter sp.).